A 187-amino-acid chain; its full sequence is Peptide deformylase (187 aa).

Fe cation is bound by residues Cys-107 and His-149. The active site involves Glu-150. Residue His-153 participates in Fe cation binding.

The protein belongs to the polypeptide deformylase family. Fe(2+) is required as a cofactor.

The catalysed reaction is N-terminal N-formyl-L-methionyl-[peptide] + H2O = N-terminal L-methionyl-[peptide] + formate. Its function is as follows. Removes the formyl group from the N-terminal Met of newly synthesized proteins. Requires at least a dipeptide for an efficient rate of reaction. N-terminal L-methionine is a prerequisite for activity but the enzyme has broad specificity at other positions. In Synechocystis sp. (strain ATCC 27184 / PCC 6803 / Kazusa), this protein is Peptide deformylase.